A 1756-amino-acid polypeptide reads, in one-letter code: Multifunctional conjugation protein TraI (1756 aa).

The segment at 1–330 (MLSFSVVKSA…TQAIAGLSER (330 aa)) is DNA relaxase. The active-site O-(5'-phospho-DNA)-tyrosine intermediate; for relaxase activity is Y16. Y17 acts as the Relaxase in catalysis. H146, H157, and H159 together coordinate Mg(2+). A DNA helicase I region spans residues 950–1500 (GKEAVTPLME…LRDVAAGRAV (551 aa)). An ATP-binding site is contributed by 992 to 999 (GYAGVGKT). Residues 1719–1753 (EQEAVREVARENLLQERLQQIERDMVRDLQKEKTL) are a coiled coil.

The protein to TraI of plasmid F. As to quaternary structure, monomer. Part of the relaxosome, a complex composed of plasmid-encodes TraI, TraM, TraY and host-encoded IHF bound to the F plasmid origin of transfer (oriT). Directly contacts coupling protein TraD. Seems to directly contact TraM via its C-terminus. Mg(2+) is required as a cofactor.

It is found in the cytoplasm. It carries out the reaction ATP-independent breakage of single-stranded DNA, followed by passage and rejoining.. It catalyses the reaction ATP + H2O = ADP + phosphate + H(+). In terms of biological role, conjugative DNA transfer (CDT) is the unidirectional transfer of ssDNA plasmid from a donor to a recipient cell. It is the central mechanism by which antibiotic resistance and virulence factors are propagated in bacterial populations. Part of the relaxosome, which facilitates a site- and strand-specific cut in the origin of transfer by TraI, at the nic site. Relaxosome formation requires binding of IHF and TraY to the oriT region, which then facilitates binding of TraI relaxase. TraI forms a covalent 5'-phosphotyrosine intermediate linkage to the ssDNA. The transesterified T-strand moves from the donor cell to the recipient cell in a 5'to 3' direction, with the DNA helicase activity of TraI unwinding the DNA. DNA transfer occurs via the conjugative pore (transferosome) an intercellular junction mediated by a type IV secretion system, with TraD providing the means to link the relaxosome to the conjugative pore. The relaxase completes DNA transfer by reversing the covalent phosphotyrosine linkage and releasing the T-strand. Its function is as follows. TraI has also been identified as DNA helicase I. DNA. helicase I is a potent, highly processive DNA-dependent ATPase, able to unwind about 1.1 kb dsDNA per second in a 5' to 3' manner. This Escherichia coli protein is Multifunctional conjugation protein TraI (traI).